We begin with the raw amino-acid sequence, 107 residues long: Cytochrome b-c1 complex subunit 8 (107 aa).

Residues 1-8 (MRPTQTML) constitute a propeptide, plays a role in role in intramitochondrial sorting. Residues 1 to 62 (MRPTQTMLGG…TAHDAVFNTF (62 aa)) lie on the Mitochondrial matrix side of the membrane. A helical membrane pass occupies residues 63–93 (RRVSSQFLYWAPSLVAGYYIMNWAIERNHYL). The Mitochondrial intermembrane segment spans residues 94 to 107 (NSKAGRAEFAGQEE).

It belongs to the UQCRQ/QCR8 family. As to quaternary structure, component of the ubiquinol-cytochrome c oxidoreductase (cytochrome b-c1 complex, complex III, CIII), a multisubunit enzyme composed of 10 subunits. The complex is composed of 3 respiratory subunits cytochrome b (cob), cytochrome c1 (cyt-1) and Rieske protein (fes-1), 2 core protein subunits pep and ucr-1, and 5 low-molecular weight protein subunits qcr6, qcr7, qcr8, qcr9 and probably NCU16844/qcr10. The complex exists as an obligatory dimer and forms supercomplexes (SCs) in the inner mitochondrial membrane with NADH-ubiquinone oxidoreductase (complex I, CI) and cytochrome c oxidase (complex IV, CIV), resulting in different assemblies (supercomplexes SCI(1)III(2), SCIII(2)IV(1) and SCIII(2)IV(2) as well as higher order I(x)III(y)IV(z) megacomplexes).

It is found in the mitochondrion inner membrane. Its function is as follows. Component of the ubiquinol-cytochrome c oxidoreductase, a multisubunit transmembrane complex that is part of the mitochondrial electron transport chain which drives oxidative phosphorylation. The respiratory chain contains 3 multisubunit complexes succinate dehydrogenase (complex II, CII), ubiquinol-cytochrome c oxidoreductase (cytochrome b-c1 complex, complex III, CIII) and cytochrome c oxidase (complex IV, CIV), that cooperate to transfer electrons derived from NADH and succinate to molecular oxygen, creating an electrochemical gradient over the inner membrane that drives transmembrane transport and the ATP synthase. The cytochrome b-c1 complex catalyzes electron transfer from ubiquinol to cytochrome c, linking this redox reaction to translocation of protons across the mitochondrial inner membrane, with protons being carried across the membrane as hydrogens on the quinol. In the process called Q cycle, 2 protons are consumed from the matrix, 4 protons are released into the intermembrane space and 2 electrons are passed to cytochrome c. The polypeptide is Cytochrome b-c1 complex subunit 8 (qcr8) (Neurospora crassa (strain ATCC 24698 / 74-OR23-1A / CBS 708.71 / DSM 1257 / FGSC 987)).